Here is a 341-residue protein sequence, read N- to C-terminus: Phosphoribosylformylglycinamidine cyclo-ligase (341 aa).

Belongs to the AIR synthase family.

The protein resides in the cytoplasm. The catalysed reaction is 2-formamido-N(1)-(5-O-phospho-beta-D-ribosyl)acetamidine + ATP = 5-amino-1-(5-phospho-beta-D-ribosyl)imidazole + ADP + phosphate + H(+). The protein operates within purine metabolism; IMP biosynthesis via de novo pathway; 5-amino-1-(5-phospho-D-ribosyl)imidazole from N(2)-formyl-N(1)-(5-phospho-D-ribosyl)glycinamide: step 2/2. This is Phosphoribosylformylglycinamidine cyclo-ligase from Synechocystis sp. (strain ATCC 27184 / PCC 6803 / Kazusa).